The chain runs to 370 residues: MTNANVDATQLTTKPSQDGFYMPAEWAAQQAVWMIWPYRPDNWRSAGAYAQATFAKVADAIGGATPVYMGVPKAFLAEAKTVMPSHVTLVEMDSNDCWARDTGPTVVVNAEGECRGVDWGFNAWGGHNGGLYFPWDKDEQVAQQMLKQHGFARYSAPLILEGGSIHVDGEGTCMTSAECLLNANRNPDLTKEQIEDLLRDYLNVKQFIWLQDGVYMDETDGHIDNMCCFARPGEVILHWTDDETDPQYPRSKAALDVLQNTVDAQGRKLKIHLLPQPGPLYCTEEESLGVTEGTGVPRTAGERLAGSYVNFLITNNRIVFPLLDPTTDDIAAQKLQEIFPEYEIVGVPAREILLGGGNIHCITQQIPSGK.

The active-site Amidino-cysteine intermediate is Cys361.

Belongs to the agmatine deiminase family.

The enzyme catalyses agmatine + H2O = N-carbamoylputrescine + NH4(+). This is Putative agmatine deiminase from Shewanella baltica (strain OS195).